Reading from the N-terminus, the 594-residue chain is Tripeptidyl-peptidase sed4 (594 aa).

The signal sequence occupies residues 1–20 (MLSSTLYAGWLLSLAAPALC). The propeptide at 21-187 (VVQEKLSAVP…AVKLPALPRR (167 aa)) is removed in mature form. Residues Asn-191, Asn-229, and Asn-250 are each glycosylated (N-linked (GlcNAc...) asparagine). Residues 197-594 (LITPDCLVEM…MKLKELVLSL (398 aa)) form the Peptidase S53 domain. Active-site charge relay system residues include Glu-272, Asp-276, and Ser-494. Asp-536 and Ile-537 together coordinate Ca(2+). Asn-568 is a glycosylation site (N-linked (GlcNAc...) asparagine). Gly-572 and Asp-574 together coordinate Ca(2+).

It depends on Ca(2+) as a cofactor. Post-translationally, N-glycosylated.

It is found in the secreted. Its subcellular location is the extracellular space. It catalyses the reaction Release of an N-terminal tripeptide from a polypeptide.. Secreted tripeptidyl-peptidase which degrades proteins at acidic pHs and is involved in virulence. The sequence is that of Tripeptidyl-peptidase sed4 (sed4) from Aspergillus fumigatus (strain ATCC MYA-4609 / CBS 101355 / FGSC A1100 / Af293) (Neosartorya fumigata).